A 524-amino-acid chain; its full sequence is Glutamyl-tRNA(Gln) amidotransferase subunit A, mitochondrial (524 aa).

K76 serves as the catalytic Charge relay system. Residues 146-168 (KQYRGKGSPDSSQEDQEPQWLVA) form a disordered region. Catalysis depends on S171, which acts as the Charge relay system. The active-site Acyl-ester intermediate is the S195.

This sequence belongs to the amidase family. GatA subfamily. Subunit of the heterotrimeric GatCAB amidotransferase (AdT) complex, composed of A (QRSL1), B (GATB) and C (GATC) subunits.

It localises to the mitochondrion. The catalysed reaction is L-glutamyl-tRNA(Gln) + L-glutamine + ATP + H2O = L-glutaminyl-tRNA(Gln) + L-glutamate + ADP + phosphate + H(+). In terms of biological role, allows the formation of correctly charged Gln-tRNA(Gln) through the transamidation of misacylated Glu-tRNA(Gln) in the mitochondria. The reaction takes place in the presence of glutamine and ATP through an activated gamma-phospho-Glu-tRNA(Gln). The protein is Glutamyl-tRNA(Gln) amidotransferase subunit A, mitochondrial of Ornithorhynchus anatinus (Duckbill platypus).